The primary structure comprises 324 residues: Beta-ketoacyl-[acyl-carrier-protein] synthase III (324 aa).

Active-site residues include Cys112 and His249. Residues Gln250–Arg254 form an ACP-binding region. Residue Asn279 is part of the active site.

This sequence belongs to the thiolase-like superfamily. FabH family. As to quaternary structure, homodimer.

The protein localises to the cytoplasm. The enzyme catalyses malonyl-[ACP] + acetyl-CoA + H(+) = 3-oxobutanoyl-[ACP] + CO2 + CoA. It participates in lipid metabolism; fatty acid biosynthesis. Its function is as follows. Catalyzes the condensation reaction of fatty acid synthesis by the addition to an acyl acceptor of two carbons from malonyl-ACP. Catalyzes the first condensation reaction which initiates fatty acid synthesis and may therefore play a role in governing the total rate of fatty acid production. Possesses both acetoacetyl-ACP synthase and acetyl transacylase activities. Its substrate specificity determines the biosynthesis of branched-chain and/or straight-chain of fatty acids. The chain is Beta-ketoacyl-[acyl-carrier-protein] synthase III from Streptococcus pyogenes serotype M1.